We begin with the raw amino-acid sequence, 1014 residues long: Ephrin type-B receptor 6 (1014 aa).

A signal peptide spans M1–A32. The Extracellular segment spans residues L33–G591. The Eph LBD domain occupies E34–R232. 2 consecutive Fibronectin type-III domains span residues P364–E479 and V480–Q575. Residue N473 is glycosylated (N-linked (GlcNAc...) asparagine). The helical transmembrane segment at S592 to F612 threads the bilayer. Over Q613–V1014 the chain is Cytoplasmic. Positions I663–I912 constitute a Protein kinase domain. Position 669–677 (I669–V677) interacts with ATP. The SAM domain maps to P941 to H1005. The PDZ-binding motif lies at V1012 to V1014.

It belongs to the protein kinase superfamily. Tyr protein kinase family. Ephrin receptor subfamily. As to quaternary structure, interacts with CBL and EPHB1. Interacts with FYN; this interaction takes place in a ligand-independent manner. Post-translationally, ligand-binding increases phosphorylation on tyrosine residues. Phosphorylation on tyrosine residues is mediated by transphosphorylation by the catalytically active EPHB1 in a ligand-independent manner. Tyrosine phosphorylation of the receptor may act as a switch on the functional transition from cell adhesion/attraction to de-adhesion/repulsion. High level in thymus, and brain. Very low levels of expression in kidney, lung, liver, bone marrow, skeletal muscle, spleen from 2 week old and adult mice, heart, testes and embryonic stem cells.

The protein localises to the cell membrane. It is found in the secreted. Kinase-defective receptor for members of the ephrin-B family. Binds to ephrin-B1 and ephrin-B2. Modulates cell adhesion and migration by exerting both positive and negative effects upon stimulation with ephrin-B2. Inhibits JNK activation, T-cell receptor-induced IL-2 secretion and CD25 expression upon stimulation with ephrin-B2. The chain is Ephrin type-B receptor 6 (Ephb6) from Mus musculus (Mouse).